Consider the following 91-residue polypeptide: MEARDILKRPVITEKSSEAMAEDKYTFDVDTRVNKTQVKMAVEEIFNVKVASVNIMNYKPKKKRMGRYQGYTNKRRKAIVTLKEGSIDLFN.

It belongs to the universal ribosomal protein uL23 family. As to quaternary structure, part of the 50S ribosomal subunit. Contacts protein L29, and trigger factor when it is bound to the ribosome.

One of the early assembly proteins it binds 23S rRNA. One of the proteins that surrounds the polypeptide exit tunnel on the outside of the ribosome. Forms the main docking site for trigger factor binding to the ribosome. This is Large ribosomal subunit protein uL23 from Staphylococcus aureus (strain USA300).